Here is a 716-residue protein sequence, read N- to C-terminus: Phosphoribosylformylglycinamidine synthase subunit PurL (716 aa).

His34 is a catalytic residue. Tyr37 provides a ligand contact to ATP. Glu78 provides a ligand contact to Mg(2+). Substrate is bound by residues 79 to 82 (SHNH) and Arg101. Catalysis depends on His80, which acts as the Proton acceptor. Asp102 lines the Mg(2+) pocket. Residue Gln226 participates in substrate binding. Position 254 (Asp254) interacts with Mg(2+). 298-300 (ESQ) serves as a coordination point for substrate. The ATP site is built by Asp474 and Gly511. Asn512 lines the Mg(2+) pocket. Substrate is bound at residue Ser514.

Belongs to the FGAMS family. As to quaternary structure, monomer. Part of the FGAM synthase complex composed of 1 PurL, 1 PurQ and 2 PurS subunits.

The protein resides in the cytoplasm. It catalyses the reaction N(2)-formyl-N(1)-(5-phospho-beta-D-ribosyl)glycinamide + L-glutamine + ATP + H2O = 2-formamido-N(1)-(5-O-phospho-beta-D-ribosyl)acetamidine + L-glutamate + ADP + phosphate + H(+). Its pathway is purine metabolism; IMP biosynthesis via de novo pathway; 5-amino-1-(5-phospho-D-ribosyl)imidazole from N(2)-formyl-N(1)-(5-phospho-D-ribosyl)glycinamide: step 1/2. In terms of biological role, part of the phosphoribosylformylglycinamidine synthase complex involved in the purines biosynthetic pathway. Catalyzes the ATP-dependent conversion of formylglycinamide ribonucleotide (FGAR) and glutamine to yield formylglycinamidine ribonucleotide (FGAM) and glutamate. The FGAM synthase complex is composed of three subunits. PurQ produces an ammonia molecule by converting glutamine to glutamate. PurL transfers the ammonia molecule to FGAR to form FGAM in an ATP-dependent manner. PurS interacts with PurQ and PurL and is thought to assist in the transfer of the ammonia molecule from PurQ to PurL. This Methanobrevibacter smithii (strain ATCC 35061 / DSM 861 / OCM 144 / PS) protein is Phosphoribosylformylglycinamidine synthase subunit PurL.